Consider the following 274-residue polypeptide: Protein-export membrane protein SecF (274 aa).

A run of 6 helical transmembrane segments spans residues 14-34, 121-141, 143-163, 175-197, 217-237, and 247-267; these read LLIL…ALGV, SVKV…FAIF, KPLL…DALG, ASFA…LSMY, TGIT…LLSM, and VVIF…AWVI.

It belongs to the SecD/SecF family. SecF subfamily. As to quaternary structure, part of the protein translocation apparatus. Forms a complex with SecD.

It localises to the cell membrane. Involved in protein export. This chain is Protein-export membrane protein SecF, found in Methanopyrus kandleri (strain AV19 / DSM 6324 / JCM 9639 / NBRC 100938).